Reading from the N-terminus, the 1182-residue chain is Rho guanine nucleotide exchange factor osg-1 (1182 aa).

Positions 1 to 12 (MLNPNDADDSDS) are enriched in acidic residues. Positions 1 to 96 (MLNPNDADDS…TNSEPNVDMP (96 aa)) are disordered. The segment covering 29 to 41 (ATVSPSTRNSFYN) has biased composition (polar residues). Residues 69-78 (ASRERSESRR) are compositionally biased toward basic and acidic residues. Positions 357-544 (VRHLAARELL…HCLAVAINQH (188 aa)) constitute a DH domain. Residues 637 to 669 (EDVQISKDTLSQLEEVERKLESSREDDRVLKKM) are a coiled coil. Residues 863-884 (INSSGSDTESSSDEGTSTAGQT) form a disordered region. Residues 865-879 (SSGSDTESSSDEGTS) are compositionally biased toward low complexity. Residues 897–922 (VVNSTERVRSRARDRLARLRNSITSI) adopt a coiled-coil conformation.

Expressed in muscles in the body wall and head, and in the nervous system in neurons including FLP and ASE neurons in the head.

Functionally, probable guanine nucleotide exchange factor which regulates the Rho GTPase rho-1. Functions in ASE sensory neurons where it promotes neuronal degeneration under conditions of oxidative stress. The protein is Rho guanine nucleotide exchange factor osg-1 of Caenorhabditis elegans.